Here is a 156-residue protein sequence, read N- to C-terminus: Large ribosomal subunit protein uL22 (156 aa).

It belongs to the universal ribosomal protein uL22 family. As to quaternary structure, part of the 50S ribosomal subunit.

Functionally, this protein binds specifically to 23S rRNA. It makes multiple contacts with different domains of the 23S rRNA in the assembled 50S subunit and ribosome. Its function is as follows. The globular domain of the protein is located near the polypeptide exit tunnel on the outside of the subunit, while an extended beta-hairpin is found that lines the wall of the exit tunnel in the center of the 70S ribosome. This chain is Large ribosomal subunit protein uL22, found in Methanocaldococcus jannaschii (strain ATCC 43067 / DSM 2661 / JAL-1 / JCM 10045 / NBRC 100440) (Methanococcus jannaschii).